Reading from the N-terminus, the 200-residue chain is Adenine phosphoribosyltransferase (200 aa).

It belongs to the purine/pyrimidine phosphoribosyltransferase family. As to quaternary structure, homodimer.

It is found in the cytoplasm. The enzyme catalyses AMP + diphosphate = 5-phospho-alpha-D-ribose 1-diphosphate + adenine. Its pathway is purine metabolism; AMP biosynthesis via salvage pathway; AMP from adenine: step 1/1. In terms of biological role, catalyzes a salvage reaction resulting in the formation of AMP, that is energically less costly than de novo synthesis. The sequence is that of Adenine phosphoribosyltransferase from Sorangium cellulosum (strain So ce56) (Polyangium cellulosum (strain So ce56)).